The primary structure comprises 602 residues: PEX5-related protein (602 aa).

Disordered stretches follow at residues 94-140 (VSQT…PETS) and 167-206 (HLMA…LNSE). A phosphoserine mark is found at Ser-181, Ser-229, Ser-233, and Ser-237. TPR repeat units follow at residues 302–335 (WPGA…DPGN), 336–369 (AEAW…QPNN), and 371–403 (KALM…NPKY). Phosphoserine is present on residues Ser-421 and Ser-423. TPR repeat units follow at residues 450–483 (PDLQ…RPED), 485–517 (SLWN…QPGF), and 519–551 (RSRY…QRKS).

Belongs to the peroxisomal targeting signal receptor family. As to quaternary structure, forms an obligate 4:4 complex with HCN2. Interacts with RAB8B. Interacts with HCN3. Interacts with HCN4 with a 4:4 HCN4:PEX5L stoichiometry; reduces the effects of cAMP on the voltage-dependence and rate of activation of HCN4. As to expression, brain specific.

It is found in the cytoplasm. It localises to the membrane. Functionally, accessory subunit of hyperpolarization-activated cyclic nucleotide-gated (HCN) channels, regulating their cell-surface expression and cyclic nucleotide dependence. The chain is PEX5-related protein (Pex5l) from Rattus norvegicus (Rat).